We begin with the raw amino-acid sequence, 249 residues long: 5'-nucleotidase SurE (249 aa).

4 residues coordinate a divalent metal cation: D8, D9, S39, and N91.

Belongs to the SurE nucleotidase family. A divalent metal cation serves as cofactor.

It localises to the cytoplasm. The enzyme catalyses a ribonucleoside 5'-phosphate + H2O = a ribonucleoside + phosphate. Functionally, nucleotidase that shows phosphatase activity on nucleoside 5'-monophosphates. In Pseudomonas aeruginosa (strain LESB58), this protein is 5'-nucleotidase SurE.